The chain runs to 337 residues: DNA-directed RNA polymerase subunit alpha (337 aa).

Positions Met-1–Ala-232 are alpha N-terminal domain (alpha-NTD). Positions Glu-266 to Phe-337 are alpha C-terminal domain (alpha-CTD).

This sequence belongs to the RNA polymerase alpha chain family. In terms of assembly, in plastids the minimal PEP RNA polymerase catalytic core is composed of four subunits: alpha, beta, beta', and beta''. When a (nuclear-encoded) sigma factor is associated with the core the holoenzyme is formed, which can initiate transcription.

It localises to the plastid. The protein resides in the chloroplast. The catalysed reaction is RNA(n) + a ribonucleoside 5'-triphosphate = RNA(n+1) + diphosphate. Its function is as follows. DNA-dependent RNA polymerase catalyzes the transcription of DNA into RNA using the four ribonucleoside triphosphates as substrates. This is DNA-directed RNA polymerase subunit alpha from Buxus microphylla (Littleleaf boxwood).